Here is a 275-residue protein sequence, read N- to C-terminus: 1-deoxy-11-beta-hydroxypentalenate dehydrogenase (275 aa).

12-36 (GAASGIGLALSARFARAGAGVVMAD) provides a ligand contact to NAD(+). S144 serves as a coordination point for substrate. Catalysis depends on Y157, which acts as the Proton acceptor. NAD(+) is bound at residue K161.

It belongs to the short-chain dehydrogenases/reductases (SDR) family.

The enzyme catalyses 1-deoxy-11beta-hydroxypentalenate + NAD(+) = 1-deoxy-11-oxopentalenate + NADH + H(+). It functions in the pathway antibiotic biosynthesis; pentalenolactone biosynthesis. Catalyzes the oxidation of 1-deoxy-11-beta-hydroxypentalenic acid to 1-deoxy-11-oxopentalenic acid in the biosynthesis of pentalenolactone antibiotic. The protein is 1-deoxy-11-beta-hydroxypentalenate dehydrogenase (penF) of Streptomyces exfoliatus (Streptomyces hydrogenans).